A 248-amino-acid chain; its full sequence is Large ribosomal subunit protein uL4 (248 aa).

Disordered regions lie at residues 48 to 95 (GTHK…GPVP) and 210 to 248 (AFSE…RTGA). Residues 233–248 (DATKARSSRHDDRTGA) show a composition bias toward basic and acidic residues.

The protein belongs to the universal ribosomal protein uL4 family. Part of the 50S ribosomal subunit.

In terms of biological role, one of the primary rRNA binding proteins, this protein initially binds near the 5'-end of the 23S rRNA. It is important during the early stages of 50S assembly. It makes multiple contacts with different domains of the 23S rRNA in the assembled 50S subunit and ribosome. Its function is as follows. Forms part of the polypeptide exit tunnel. This Tropheryma whipplei (strain TW08/27) (Whipple's bacillus) protein is Large ribosomal subunit protein uL4.